A 314-amino-acid chain; its full sequence is Galectin-12 (314 aa).

Galectin domains are found at residues 27-161 (YGTT…VGFL) and 190-314 (CSRA…CVHC).

Its subcellular location is the nucleus. Its function is as follows. Binds lactose. May participate in the apoptosis of adipocytes. This Mus musculus (Mouse) protein is Galectin-12 (Lgals12).